A 940-amino-acid polypeptide reads, in one-letter code: Chromatin assembly factor 1 subunit FSM (940 aa).

3 disordered regions span residues 317–473 (NVDD…DPCT), 638–682 (VDSD…FFVP), and 919–940 (KTTQ…PSSQ). Residues 320–329 (DSQLQKNTST) are compositionally biased toward polar residues. A coiled-coil region spans residues 329–439 (TNEKDTQKAQ…LKKQLAIQKQ (111 aa)). The segment covering 330–429 (NEKDTQKAQK…QKRREKEAVQ (100 aa)) has biased composition (basic and acidic residues). A compositionally biased stretch (low complexity) spans 430–440 (LKKQLAIQKQA). Positions 445-461 (RFFKNKKDSEKLEKPGG) are enriched in basic and acidic residues. Acidic residues predominate over residues 638 to 650 (VDSDDEWEEEDPG).

The protein belongs to the CHAF1A family. In terms of assembly, component of the chromatin assembly factor 1 (CAF-1) complex, composed of FSM (FAS1), FAS2 and MSI1. In terms of tissue distribution, in embryo, expressed in leaf primordia, coleoptile and radicle. In seedlings, expressed in cell division zone of roots, SAM and leaf primordia. Expressed in floral organ primordia.

The protein resides in the nucleus. Its function is as follows. Component of the chromatin assembly factor complex (CAF-1) involved in chromatin assembly following DNA replication and DNA repair. Required for several aspects of development, including apical meristem maintenance by regulating the durations of the S- and G2-phases of the cell cycle through its chromatin assembly activity. In Oryza sativa subsp. japonica (Rice), this protein is Chromatin assembly factor 1 subunit FSM (FSM).